Reading from the N-terminus, the 344-residue chain is Ribosome biogenesis protein RPF2 (344 aa).

The Brix domain maps to 28 to 243 (KQALFIPGQS…IGRIHTPSPD (216 aa)). Phosphoserine is present on Ser-73. A disordered region spans residues 291-344 (KGLKSKFDQGTEEGDGEVDEDYEDEASYSDDGQEYEEEFVSATDIEPSAKRQKK). Residues 300–329 (GTEEGDGEVDEDYEDEASYSDDGQEYEEEF) show a composition bias toward acidic residues.

This sequence belongs to the RPF2 family. Part of a complex that includes BRX1, RPF1, RPF2 and SSF1 or SSF2. Component of a hexameric 5S RNP precursor complex, composed of 5S RNA, RRS1, RPF2, RPL5, RPL11A/RPL11B and SYO1; this complex acts as a precursor for ribosome assembly.

Its subcellular location is the nucleus. The protein resides in the nucleolus. In terms of biological role, required for biogenesis of the 60S ribosomal subunit. This Saccharomyces cerevisiae (strain ATCC 204508 / S288c) (Baker's yeast) protein is Ribosome biogenesis protein RPF2 (RPF2).